A 466-amino-acid chain; its full sequence is Soluble pyridine nucleotide transhydrogenase (466 aa).

Residue 36-45 (ERYHNVGGGC) participates in FAD binding.

This sequence belongs to the class-I pyridine nucleotide-disulfide oxidoreductase family. FAD serves as cofactor.

It is found in the cytoplasm. It carries out the reaction NAD(+) + NADPH = NADH + NADP(+). In terms of biological role, conversion of NADPH, generated by peripheral catabolic pathways, to NADH, which can enter the respiratory chain for energy generation. This chain is Soluble pyridine nucleotide transhydrogenase, found in Salmonella gallinarum (strain 287/91 / NCTC 13346).